The primary structure comprises 334 residues: Protein-methionine-sulfoxide reductase catalytic subunit MsrP (334 aa).

Positions 1–44 (MKKKQFLKESDVTAESVFFMKRRQVLKALGISAAALSLPHAAHA) form a signal peptide, tat-type signal. Mo-molybdopterin-binding positions include Asn88, 91 to 92 (YE), Cys146, Thr181, Asn233, Arg238, and 249 to 251 (GIK).

Belongs to the MsrP family. Heterodimer of a catalytic subunit (MsrP) and a heme-binding subunit (MsrQ). Requires Mo-molybdopterin as cofactor. Post-translationally, predicted to be exported by the Tat system. The position of the signal peptide cleavage has not been experimentally proven.

The protein localises to the periplasm. It carries out the reaction L-methionyl-[protein] + a quinone + H2O = L-methionyl-(S)-S-oxide-[protein] + a quinol. It catalyses the reaction L-methionyl-[protein] + a quinone + H2O = L-methionyl-(R)-S-oxide-[protein] + a quinol. Functionally, part of the MsrPQ system that repairs oxidized periplasmic proteins containing methionine sulfoxide residues (Met-O), using respiratory chain electrons. Thus protects these proteins from oxidative-stress damage caused by reactive species of oxygen and chlorine generated by the host defense mechanisms. MsrPQ is essential for the maintenance of envelope integrity under bleach stress, rescuing a wide series of structurally unrelated periplasmic proteins from methionine oxidation, including the primary periplasmic chaperone SurA and the lipoprotein Pal. The catalytic subunit MsrP is non-stereospecific, being able to reduce both (R-) and (S-) diastereoisomers of methionine sulfoxide. The sequence is that of Protein-methionine-sulfoxide reductase catalytic subunit MsrP from Escherichia coli O139:H28 (strain E24377A / ETEC).